Consider the following 44-residue polypeptide: Cytochrome b559 subunit beta (44 aa).

Residues 19–35 (WLAVHTLAVPTVFFVGA) form a helical membrane-spanning segment. Position 23 (H23) interacts with heme.

This sequence belongs to the PsbE/PsbF family. As to quaternary structure, heterodimer of an alpha subunit and a beta subunit. PSII is composed of 1 copy each of membrane proteins PsbA, PsbB, PsbC, PsbD, PsbE, PsbF, PsbH, PsbI, PsbJ, PsbK, PsbL, PsbM, PsbT, PsbX, PsbY, PsbZ, Psb30/Ycf12, peripheral proteins PsbO, CyanoQ (PsbQ), PsbU, PsbV and a large number of cofactors. It forms dimeric complexes. Heme b is required as a cofactor.

The protein resides in the cellular thylakoid membrane. In terms of biological role, this b-type cytochrome is tightly associated with the reaction center of photosystem II (PSII). PSII is a light-driven water:plastoquinone oxidoreductase that uses light energy to abstract electrons from H(2)O, generating O(2) and a proton gradient subsequently used for ATP formation. It consists of a core antenna complex that captures photons, and an electron transfer chain that converts photonic excitation into a charge separation. The polypeptide is Cytochrome b559 subunit beta (Crocosphaera subtropica (strain ATCC 51142 / BH68) (Cyanothece sp. (strain ATCC 51142))).